The sequence spans 97 residues: DNA-binding protein NEQ150 (97 aa).

Belongs to the PDCD5 family.

This is DNA-binding protein NEQ150 from Nanoarchaeum equitans (strain Kin4-M).